The following is a 189-amino-acid chain: MASKRALVILAKGAEEMETVIPVDIMRRAGIKVTVAGLAGKDPVQCSRDVVICPDTSLEEAKTQGPYDVVVLPGGNLGAQNLSESALVKEILKEQENRKGLIAAICAGPTALLAHEVGFGCKVTSHPLAKDKMMNGSHYSYSESRVEKDGLILTSRGPGTSFEFALAIVEALSGKDMANQVKAPLVLKD.

Ala-2 carries the post-translational modification N-acetylalanine. Residues Cys-46 and Cys-53 are each lipidated (S-palmitoyl cysteine). Position 67 is a phosphotyrosine (Tyr-67). Catalysis depends on Cys-106, which acts as the Nucleophile. Cys-106 carries the post-translational modification Cysteine sulfinic acid (-SO2H); alternate. Cys-106 is lipidated: S-palmitoyl cysteine; alternate. Residue His-126 is part of the active site. Lys-130 participates in a covalent cross-link: Glycyl lysine isopeptide (Lys-Gly) (interchain with G-Cter in SUMO). The residue at position 148 (Lys-148) is an N6-acetyllysine. Lys-182 is modified (N6-succinyllysine).

This sequence belongs to the peptidase C56 family. As to quaternary structure, homodimer. Binds EFCAB6/DJBP and PIAS2. Part of a ternary complex containing PARK7, EFCAB6/DJBP and AR. Interacts (via N-terminus) with OTUD7B. Interacts with BBS1, HIPK1, CLCF1 and MTERF. Forms a complex with PINK1 and PRKN. Interacts (via C-terminus) with NCF1; the interaction is enhanced by LPS and modulates NCF1 phosphorylation and membrane translocation. Interacts with NENF. The cofactor is Deglycase activity does not require glutathione as a cofactor, however, glycated glutathione constitutes a PARK7 substrate.. Post-translationally, sumoylated on Lys-130 by PIAS2 or PIAS4; which is essential for cell-growth promoting activity and transforming activity. In terms of processing, undergoes cleavage of a C-terminal peptide and subsequent activation of protease activity in response to oxidative stress. In terms of tissue distribution, ubiquitous. Detected on epididymal sperm. Highly expressed in testis and prostate. Detected at lower levels in heart, lung, brain, liver, kidney, seminal vesicle, caput and corpus epididymis.

It localises to the cell membrane. The protein resides in the cytoplasm. It is found in the membrane raft. The protein localises to the nucleus. Its subcellular location is the mitochondrion. It localises to the endoplasmic reticulum. It catalyses the reaction N(omega)-(1-hydroxy-2-oxopropyl)-L-arginyl-[protein] + H2O = lactate + L-arginyl-[protein] + H(+). It carries out the reaction N(6)-(1-hydroxy-2-oxopropyl)-L-lysyl-[protein] + H2O = lactate + L-lysyl-[protein] + H(+). The catalysed reaction is S-(1-hydroxy-2-oxopropyl)-L-cysteinyl-[protein] + H2O = lactate + L-cysteinyl-[protein] + H(+). The enzyme catalyses N(omega)-(1-hydroxy-2-oxoethyl)-L-arginyl-[protein] + H2O = L-arginyl-[protein] + glycolate + H(+). It catalyses the reaction N(6)-(1-hydroxy-2-oxoethyl)-L-lysyl-[protein] + H2O = glycolate + L-lysyl-[protein] + H(+). It carries out the reaction S-(1-hydroxy-2-oxoethyl)-L-cysteinyl-[protein] + H2O = glycolate + L-cysteinyl-[protein] + H(+). The catalysed reaction is N(2)-(1-hydroxy-2-oxopropyl)-dGTP + H2O = lactate + dGTP + H(+). The enzyme catalyses N(2)-(1-hydroxy-2-oxopropyl)-GTP + H2O = lactate + GTP + H(+). It catalyses the reaction N(2)-(1-hydroxy-2-oxopropyl)-GDP + H2O = lactate + GDP + H(+). It carries out the reaction N(2)-(1-hydroxy-2-oxopropyl)-GMP + H2O = lactate + GMP + H(+). The catalysed reaction is N(2)-(1-hydroxy-2-oxoethyl)-dGTP + H2O = dGTP + glycolate + H(+). The enzyme catalyses N(2)-(1-hydroxy-2-oxoethyl)-GTP + H2O = glycolate + GTP + H(+). It catalyses the reaction N(2)-(1-hydroxy-2-oxoethyl)-GDP + H2O = glycolate + GDP + H(+). It carries out the reaction N(2)-(1-hydroxy-2-oxoethyl)-GMP + H2O = glycolate + GMP + H(+). The catalysed reaction is an N(2)-(1-hydroxy-2-oxopropyl)-guanosine in RNA + H2O = a guanosine in RNA + lactate + H(+). The enzyme catalyses an N(2)-(1-hydroxy-2-oxopropyl)-2'-deoxyguanosine in DNA + H2O = a 2'-deoxyguanosine in DNA + lactate + H(+). It catalyses the reaction an N(2)-(1-hydroxy-2-oxoethyl)-guanosine in RNA + H2O = a guanosine in RNA + glycolate + H(+). It carries out the reaction an N(2)-(1-hydroxy-2-oxoethyl)-2'-deoxyguanosine in DNA + H2O = a 2'-deoxyguanosine in DNA + glycolate + H(+). Protein and nucleotide deglycase that catalyzes the deglycation of the Maillard adducts formed between amino groups of proteins or nucleotides and reactive carbonyl groups of glyoxals. Thus, functions as a protein deglycase that repairs methylglyoxal- and glyoxal-glycated proteins, and releases repaired proteins and lactate or glycolate, respectively. Deglycates cysteine, arginine and lysine residues in proteins, and thus reactivates these proteins by reversing glycation by glyoxals. Acts on early glycation intermediates (hemithioacetals and aminocarbinols), preventing the formation of advanced glycation endproducts (AGE) that cause irreversible damage. Also functions as a nucleotide deglycase able to repair glycated guanine in the free nucleotide pool (GTP, GDP, GMP, dGTP) and in DNA and RNA. Is thus involved in a major nucleotide repair system named guanine glycation repair (GG repair), dedicated to reversing methylglyoxal and glyoxal damage via nucleotide sanitization and direct nucleic acid repair. Also displays an apparent glyoxalase activity that in fact reflects its deglycase activity. Plays an important role in cell protection against oxidative stress and cell death acting as oxidative stress sensor and redox-sensitive chaperone and protease; functions probably related to its primary function. It is involved in neuroprotective mechanisms like the stabilization of NFE2L2 and PINK1 proteins, male fertility as a positive regulator of androgen signaling pathway as well as cell growth and transformation through, for instance, the modulation of NF-kappa-B signaling pathway. Eliminates hydrogen peroxide and protects cells against hydrogen peroxide-induced cell death. Required for correct mitochondrial morphology and function as well as for autophagy of dysfunctional mitochondria. Plays a role in regulating expression or stability of the mitochondrial uncoupling proteins SLC25A14 and SLC25A27 in dopaminergic neurons of the substantia nigra pars compacta and attenuates the oxidative stress induced by calcium entry into the neurons via L-type channels during pacemaking. Regulates astrocyte inflammatory responses, may modulate lipid rafts-dependent endocytosis in astrocytes and neuronal cells. In pancreatic islets, involved in the maintenance of mitochondrial reactive oxygen species (ROS) levels and glucose homeostasis in an age- and diet dependent manner. Protects pancreatic beta cells from cell death induced by inflammatory and cytotoxic setting. Binds to a number of mRNAs containing multiple copies of GG or CC motifs and partially inhibits their translation but dissociates following oxidative stress. Metal-binding protein able to bind copper as well as toxic mercury ions, enhances the cell protection mechanism against induced metal toxicity. In macrophages, interacts with the NADPH oxidase subunit NCF1 to direct NADPH oxidase-dependent ROS production, and protects against sepsis. The polypeptide is Parkinson disease protein 7 homolog (Rattus norvegicus (Rat)).